The primary structure comprises 1582 residues: Hybrid PKS-NRPS synthetase TAS1 (1582 aa).

A condensation (C) domain region spans residues Ile33 to Val387. An adenylation (A) domain region spans residues Arg499–Asn892. The Carrier domain maps to Asn1015–Val1092. A Ketosynthase family 3 (KS3) domain is found at Ala1127 to Ser1574. Catalysis depends on for beta-ketoacyl synthase activity residues Cys1294 and His1432. The interval Glu1460–Arg1485 is disordered. Positions Arg1462–Arg1485 are enriched in polar residues. Asn1498 acts as the For beta-ketoacyl synthase activity in catalysis.

The protein in the N-terminal section; belongs to the NRP synthetase family. It depends on pantetheine 4'-phosphate as a cofactor.

The catalysed reaction is acetoacetyl-CoA + L-isoleucine + ATP = tenuazonic acid + AMP + diphosphate + CoA + 2 H(+). Hybrid PKS-NRPS synthetase that mediates the biosynthesis of the toxin tenuazonic acid (TeA), an inhibitor of protein biosynthesis on ribosomes by suppressing the release of new protein. TAS1 alone is sufficient for TeA synthesis via the condensation of isoleucine (Ile) with acetoacetyl-CoA by the N-terminal NRPS module and subsequent cyclization conducted by the C-terminal KS domain. The polypeptide is Hybrid PKS-NRPS synthetase TAS1 (Cordyceps militaris (strain CM01) (Caterpillar fungus)).